Consider the following 119-residue polypeptide: Large ribosomal subunit protein uL18 (119 aa).

This sequence belongs to the universal ribosomal protein uL18 family. As to quaternary structure, part of the 50S ribosomal subunit; part of the 5S rRNA/L5/L18/L25 subcomplex. Contacts the 5S and 23S rRNAs.

In terms of biological role, this is one of the proteins that bind and probably mediate the attachment of the 5S RNA into the large ribosomal subunit, where it forms part of the central protuberance. This Staphylococcus aureus (strain Mu3 / ATCC 700698) protein is Large ribosomal subunit protein uL18.